A 401-amino-acid polypeptide reads, in one-letter code: Nicotinate phosphoribosyltransferase (401 aa).

Residue His-224 is modified to Phosphohistidine; by autocatalysis.

It belongs to the NAPRTase family. Post-translationally, transiently phosphorylated on a His residue during the reaction cycle. Phosphorylation strongly increases the affinity for substrates and increases the rate of nicotinate D-ribonucleotide production. Dephosphorylation regenerates the low-affinity form of the enzyme, leading to product release.

It catalyses the reaction nicotinate + 5-phospho-alpha-D-ribose 1-diphosphate + ATP + H2O = nicotinate beta-D-ribonucleotide + ADP + phosphate + diphosphate. The protein operates within cofactor biosynthesis; NAD(+) biosynthesis; nicotinate D-ribonucleotide from nicotinate: step 1/1. In terms of biological role, catalyzes the synthesis of beta-nicotinate D-ribonucleotide from nicotinate and 5-phospho-D-ribose 1-phosphate at the expense of ATP. This chain is Nicotinate phosphoribosyltransferase, found in Pseudomonas putida (strain ATCC 700007 / DSM 6899 / JCM 31910 / BCRC 17059 / LMG 24140 / F1).